The chain runs to 78 residues: NAD(P)H-quinone oxidoreductase subunit L (78 aa).

Helical transmembrane passes span 10 to 30 (IILIIYAALAGAYFLVMPAIV) and 47 to 67 (VFMYFLMFLFFPGMLVLSPFL).

This sequence belongs to the complex I NdhL subunit family. NDH-1 can be composed of about 15 different subunits; different subcomplexes with different compositions have been identified which probably have different functions.

Its subcellular location is the cellular thylakoid membrane. It carries out the reaction a plastoquinone + NADH + (n+1) H(+)(in) = a plastoquinol + NAD(+) + n H(+)(out). The catalysed reaction is a plastoquinone + NADPH + (n+1) H(+)(in) = a plastoquinol + NADP(+) + n H(+)(out). Its function is as follows. NDH-1 shuttles electrons from an unknown electron donor, via FMN and iron-sulfur (Fe-S) centers, to quinones in the respiratory and/or the photosynthetic chain. The immediate electron acceptor for the enzyme in this species is believed to be plastoquinone. Couples the redox reaction to proton translocation, and thus conserves the redox energy in a proton gradient. Cyanobacterial NDH-1 also plays a role in inorganic carbon-concentration. This chain is NAD(P)H-quinone oxidoreductase subunit L, found in Trichodesmium erythraeum (strain IMS101).